The sequence spans 191 residues: Orotate phosphoribosyltransferase (191 aa).

A 5-phospho-alpha-D-ribose 1-diphosphate-binding site is contributed by 116–124 (EDVVTTGGS). 2 residues coordinate orotate: T120 and R148.

It belongs to the purine/pyrimidine phosphoribosyltransferase family. PyrE subfamily. In terms of assembly, homodimer. Requires Mg(2+) as cofactor.

The enzyme catalyses orotidine 5'-phosphate + diphosphate = orotate + 5-phospho-alpha-D-ribose 1-diphosphate. It functions in the pathway pyrimidine metabolism; UMP biosynthesis via de novo pathway; UMP from orotate: step 1/2. Its function is as follows. Catalyzes the transfer of a ribosyl phosphate group from 5-phosphoribose 1-diphosphate to orotate, leading to the formation of orotidine monophosphate (OMP). This Carboxydothermus hydrogenoformans (strain ATCC BAA-161 / DSM 6008 / Z-2901) protein is Orotate phosphoribosyltransferase.